The primary structure comprises 392 residues: Flavohemoprotein (392 aa).

The region spanning 1 to 139 is the Globin domain; sequence MLNAEQRAII…LADILIGAEE (139 aa). A heme b-binding site is contributed by His85. Residues Tyr95 and Glu138 each act as charge relay system in the active site. Positions 150–392 are reductase; the sequence is GGWRGTREFR…EFFGPAAALE (243 aa). The FAD-binding FR-type domain occupies 153–256; it reads RGTREFRLVR…FPPAGDFTLA (104 aa). FAD is bound by residues Tyr191 and 205–208; that span reads RNYS. 268–273 provides a ligand contact to NADP(+); it reads GVGITP. 384–387 serves as a coordination point for FAD; the sequence is FFGP.

The protein belongs to the globin family. Two-domain flavohemoproteins subfamily. This sequence in the C-terminal section; belongs to the flavoprotein pyridine nucleotide cytochrome reductase family. Requires heme b as cofactor. It depends on FAD as a cofactor.

The enzyme catalyses 2 nitric oxide + NADPH + 2 O2 = 2 nitrate + NADP(+) + H(+). It catalyses the reaction 2 nitric oxide + NADH + 2 O2 = 2 nitrate + NAD(+) + H(+). Its function is as follows. Is involved in NO detoxification in an aerobic process, termed nitric oxide dioxygenase (NOD) reaction that utilizes O(2) and NAD(P)H to convert NO to nitrate, which protects the bacterium from various noxious nitrogen compounds. Therefore, plays a central role in the inducible response to nitrosative stress. The chain is Flavohemoprotein from Pseudomonas putida (strain ATCC 47054 / DSM 6125 / CFBP 8728 / NCIMB 11950 / KT2440).